The following is a 259-amino-acid chain: MAAAEQKGKKPRTDGAEAEPVDAALLQSIEKLQEIQDEIEKVNEEACDKVLELEQKYNEVRRPVYVRRNKIIKQIPDFWLTAFLSHPMLGELLTEDDQKIFKHLESIDVDDSEDIKSGYSITLTFSPNPYFEDTKLTKTYSFSDDEAVKVKATSIRWKKGMDIANDRAYTKKGDKRILIDESFFTWFNSEKNRSFAHGAMDEVADVIKEDLWPNPLKYFNNEFEEELELLDDDDEVSDDDDEEEDDEDQGEGEEDGEEN.

Positions 1-15 are enriched in basic and acidic residues; it reads MAAAEQKGKKPRTDG. The segment at 1-20 is disordered; that stretch reads MAAAEQKGKKPRTDGAEAEP. A coiled-coil region spans residues 21 to 62; it reads VDAALLQSIEKLQEIQDEIEKVNEEACDKVLELEQKYNEVRR. Residues 228–259 form a disordered region; that stretch reads ELLDDDDEVSDDDDEEEDDEDQGEGEEDGEEN.

Belongs to the nucleosome assembly protein (NAP) family.

Its subcellular location is the nucleus. The protein localises to the cytoplasm. In terms of biological role, acts as a histone H2A/H2B chaperone in nucleosome assembly. This Oryza sativa subsp. indica (Rice) protein is NAP1-related protein 1.